An 81-amino-acid chain; its full sequence is Acylphosphatase (81 aa).

Positions 1–81 (MYIFHGRVQG…VKYNDFQIRY (81 aa)) constitute an Acylphosphatase-like domain. Catalysis depends on residues Arg-14 and Asn-32.

Belongs to the acylphosphatase family.

The enzyme catalyses an acyl phosphate + H2O = a carboxylate + phosphate + H(+). This chain is Acylphosphatase (acyP), found in Picrophilus torridus (strain ATCC 700027 / DSM 9790 / JCM 10055 / NBRC 100828 / KAW 2/3).